A 143-amino-acid chain; its full sequence is Transcriptional regulator MraZ (143 aa).

SpoVT-AbrB domains lie at 5 to 47 (EYHH…PMQG) and 76 to 119 (ATEC…SRSR).

The protein belongs to the MraZ family. In terms of assembly, forms oligomers.

The protein localises to the cytoplasm. Its subcellular location is the nucleoid. This is Transcriptional regulator MraZ from Moorella thermoacetica (strain ATCC 39073 / JCM 9320).